A 187-amino-acid chain; its full sequence is uncharacterized protein (187 aa).

Residues 3 to 23 (AIIIFLILFIVGVLIGVGVYY) form a helical membrane-spanning segment.

It is found in the membrane. This is an uncharacterized protein from Methanocaldococcus jannaschii (strain ATCC 43067 / DSM 2661 / JAL-1 / JCM 10045 / NBRC 100440) (Methanococcus jannaschii).